We begin with the raw amino-acid sequence, 429 residues long: 3-phosphoshikimate 1-carboxyvinyltransferase (429 aa).

3-phosphoshikimate is bound by residues K23, S24, and R28. K23 is a binding site for phosphoenolpyruvate. The phosphoenolpyruvate site is built by G95 and R123. 3-phosphoshikimate is bound by residues S168, Q170, D316, and K343. Q170 lines the phosphoenolpyruvate pocket. D316 serves as the catalytic Proton acceptor. Phosphoenolpyruvate-binding residues include R347 and R389.

The protein belongs to the EPSP synthase family. As to quaternary structure, monomer.

The protein localises to the cytoplasm. The enzyme catalyses 3-phosphoshikimate + phosphoenolpyruvate = 5-O-(1-carboxyvinyl)-3-phosphoshikimate + phosphate. Its pathway is metabolic intermediate biosynthesis; chorismate biosynthesis; chorismate from D-erythrose 4-phosphate and phosphoenolpyruvate: step 6/7. Its function is as follows. Catalyzes the transfer of the enolpyruvyl moiety of phosphoenolpyruvate (PEP) to the 5-hydroxyl of shikimate-3-phosphate (S3P) to produce enolpyruvyl shikimate-3-phosphate and inorganic phosphate. This Bacillus cereus (strain AH187) protein is 3-phosphoshikimate 1-carboxyvinyltransferase.